We begin with the raw amino-acid sequence, 220 residues long: Glycerol-3-phosphate acyltransferase (220 aa).

The next 6 helical transmembrane spans lie at 11–31 (INVI…GYAL), 70–90 (LLVL…SKLF), 96–116 (LQWM…FLNF), 127–147 (GSVV…WFFV), 153–173 (ISSL…FFVP), and 192–212 (PMVL…FNLL).

It belongs to the PlsY family. In terms of assembly, probably interacts with PlsX.

It is found in the cell inner membrane. The enzyme catalyses an acyl phosphate + sn-glycerol 3-phosphate = a 1-acyl-sn-glycero-3-phosphate + phosphate. Its pathway is lipid metabolism; phospholipid metabolism. Catalyzes the transfer of an acyl group from acyl-phosphate (acyl-PO(4)) to glycerol-3-phosphate (G3P) to form lysophosphatidic acid (LPA). This enzyme utilizes acyl-phosphate as fatty acyl donor, but not acyl-CoA or acyl-ACP. This is Glycerol-3-phosphate acyltransferase from Helicobacter pylori (strain J99 / ATCC 700824) (Campylobacter pylori J99).